Reading from the N-terminus, the 196-residue chain is RNA pyrophosphohydrolase (196 aa).

Residues 6-149 (GYRPNVGIVI…KRDVYRKVMK (144 aa)) enclose the Nudix hydrolase domain. Positions 38 to 59 (GGINDNESAEQAMYRELHEEVG) match the Nudix box motif.

The protein belongs to the Nudix hydrolase family. RppH subfamily. Requires a divalent metal cation as cofactor.

Its function is as follows. Accelerates the degradation of transcripts by removing pyrophosphate from the 5'-end of triphosphorylated RNA, leading to a more labile monophosphorylated state that can stimulate subsequent ribonuclease cleavage. This is RNA pyrophosphohydrolase from Haemophilus influenzae (strain ATCC 51907 / DSM 11121 / KW20 / Rd).